The following is a 405-amino-acid chain: uncharacterized protein (405 aa).

Disordered stretches follow at residues 1–21 (MSKK…ESKT), 150–179 (IKDE…QEGP), and 285–405 (DDED…KSRS). Over residues 7-16 (KNASPKNNSD) the composition is skewed to polar residues. 2 stretches are compositionally biased toward acidic residues: residues 312–331 (SDDE…DDEE) and 349–358 (DDEDDEEEGE). Basic residues-rich tracts occupy residues 365–374 (SSKKSSKKAS) and 390–405 (PKKK…KSRS).

This is an uncharacterized protein from Acanthamoeba polyphaga (Amoeba).